The sequence spans 413 residues: Probable protein phosphatase 2C 78 (413 aa).

The tract at residues 21 to 40 (KKATTTTRRRERSSSQAARR) is disordered. The PPM-type phosphatase domain maps to 111–409 (KYGVASVCGR…DNVSVVVVDL (299 aa)). Residues aspartate 153, glycine 154, aspartate 327, and aspartate 400 each coordinate Mn(2+).

It belongs to the PP2C family. It depends on Mg(2+) as a cofactor. The cofactor is Mn(2+).

The protein localises to the golgi apparatus. It is found in the nucleus. It catalyses the reaction O-phospho-L-seryl-[protein] + H2O = L-seryl-[protein] + phosphate. It carries out the reaction O-phospho-L-threonyl-[protein] + H2O = L-threonyl-[protein] + phosphate. Acts as a negative regulator of abscisic acid (ABA) signaling for stomatal closure in leaves, and controls water loss during leaf senescence. Activated by the NAC029/NAP transcription factor during ABA signaling in senescing leaves. Functions as a negative regulator of osmotic stress and ABA signaling. Acts as a negative regulator of response to drought. In Arabidopsis thaliana (Mouse-ear cress), this protein is Probable protein phosphatase 2C 78.